Consider the following 205-residue polypeptide: Heat shock protein beta-11 (205 aa).

In terms of domain architecture, sHSP spans 67–180 (VSPMTTFKPI…NERVIPITYT (114 aa)). A disordered region spans residues 184 to 205 (KNPALQNSEPENQAVEAEAAEN). The segment covering 192 to 205 (EPENQAVEAEAAEN) has biased composition (low complexity).

This sequence belongs to the small heat shock protein (HSP20) family. In terms of tissue distribution, expressed specifically in the rostral-most somites at 24 hpf. At 48 hpf, expression continues in the rostral-most somites and also in the notochord. Somite expression was restricted to the vicinity of the horizontal myoseptum. In adults, expressed in the heart.

This Danio rerio (Zebrafish) protein is Heat shock protein beta-11 (hspb11).